The primary structure comprises 388 residues: Flavin oxidoreductase hxnT (388 aa).

The protein belongs to the NADH:flavin oxidoreductase/NADH oxidase family. It depends on FMN as a cofactor.

Its function is as follows. Flavin oxidoreductase, part of the hnx cluster involved in the purine degradation. The nicotinate hydroxylase hnxS accepts nicotinate as a substrate and catalyzes the first step of nicotinate catabolism. The major facilitator-type transporters hxnP and hxnZ are probably involved in the uptake of nicotinate-derived metabolites, and the oxidoreductases hxnT and hxnY in the further metabolism of 6-OH nicotinic acid. In Emericella nidulans (strain FGSC A4 / ATCC 38163 / CBS 112.46 / NRRL 194 / M139) (Aspergillus nidulans), this protein is Flavin oxidoreductase hxnT.